A 418-amino-acid chain; its full sequence is FAD-dependent monooxygenase fmqB (418 aa).

FAD contacts are provided by Val-12 and Arg-68. Residue Arg-147 is part of the active site. Residues Asp-272 and Gly-285 each contribute to the FAD site.

This sequence belongs to the paxM FAD-dependent monooxygenase family.

It is found in the cytoplasm. It participates in alkaloid biosynthesis. Its function is as follows. FAD-dependent monooxygenase; part of the gene cluster that mediates the biosynthesis of the antitumor fumiquinazolines that confer a dual-usage capability to defend against phagocytes in the environment and animal hosts. The simplest member is fumiquinazoline F (FQF) with a 6-6-6 tricyclic core derived from anthranilic acid (Ant), tryptophan (Trp), and alanine (Ala). The trimodular NRPS fmqA is responsible for FQF formation. Modules 1, 2 and 3 of fmqA are predicted to activate and load Ant, Trp and Ala, respectively, providing for the assembly of an Ant-Trp-Ala-S-enzyme intermediate that would undergo double cyclization for chain release and generation of the tricyclic 6-6-6 product fumiquinazoline F. The presence of an E domain predicted for module 2 of fmqA is consistent with epimerization of L-Trp to D-Trp during assembly to generate the R-stereocenter at C14 of FQF. The FAD-dependent monooxygenase fmqB and the monomodular NRPS fmqC then maturate FQF to FQA. FmqB oxidizes the 2',3'-double bond of the indole side chain of FQF, and fmqC activates L-Ala as the adenylate, installs it as the pantetheinyl thioester on its carrier protein domain, and acylates the oxidized indole for subsequent intramolecular cyclization to create the 6-5-5-imidazolindolone of FQA. The FAD-linked oxidoreductase fmqD introduces a third layer of scaffold complexity by converting FQA to the spirohemiaminal FQC, presumably by catalyzing the formation of a transient imine within the pyrazinone ring. FQC subsequently converts nonenzymatically to the known cyclic aminal FQD. The chain is FAD-dependent monooxygenase fmqB from Aspergillus fumigatus (strain ATCC MYA-4609 / CBS 101355 / FGSC A1100 / Af293) (Neosartorya fumigata).